A 229-amino-acid chain; its full sequence is GTP cyclohydrolase 1 (229 aa).

Residues 1 to 21 (MTLAKPGSGSQSRMDDKAHFK) are disordered. Zn(2+)-binding residues include cysteine 116, histidine 119, and cysteine 187.

The protein belongs to the GTP cyclohydrolase I family. In terms of assembly, toroid-shaped homodecamer, composed of two pentamers of five dimers.

The enzyme catalyses GTP + H2O = 7,8-dihydroneopterin 3'-triphosphate + formate + H(+). The protein operates within cofactor biosynthesis; 7,8-dihydroneopterin triphosphate biosynthesis; 7,8-dihydroneopterin triphosphate from GTP: step 1/1. The sequence is that of GTP cyclohydrolase 1 from Synechococcus sp. (strain JA-2-3B'a(2-13)) (Cyanobacteria bacterium Yellowstone B-Prime).